We begin with the raw amino-acid sequence, 167 residues long: Leptin (167 aa).

Residues 1 to 21 form the signal peptide; the sequence is MRCGPLYQFLWLWPYLSYVEA. A disulfide bridge links Cys-117 with Cys-167.

This sequence belongs to the leptin family.

The protein localises to the secreted. Its function is as follows. Key player in the regulation of energy balance and body weight control. Once released into the circulation, has central and peripheral effects by binding LEPR, found in many tissues, which results in the activation of several major signaling pathways. In the hypothalamus, acts as an appetite-regulating factor that induces a decrease in food intake and an increase in energy consumption by inducing anorexinogenic factors and suppressing orexigenic neuropeptides, also regulates bone mass and secretion of hypothalamo-pituitary-adrenal hormones. In the periphery, increases basal metabolism, influences reproductive function, regulates pancreatic beta-cell function and insulin secretion, is pro-angiogenic for endothelial cell and affects innate and adaptive immunity. In the arcuate nucleus of the hypothalamus, activates by depolarization POMC neurons inducing FOS and SOCS3 expression to release anorexigenic peptides and inhibits by hyperpolarization NPY neurons inducing SOCS3 with a consequent reduction on release of orexigenic peptides. In addition to its known satiety inducing effect, has a modulatory role in nutrient absorption. In the intestine, reduces glucose absorption by enterocytes by activating PKC and leading to a sequential activation of p38, PI3K and ERK signaling pathways which exerts an inhibitory effect on glucose absorption. Acts as a growth factor on certain tissues, through the activation of different signaling pathways increases expression of genes involved in cell cycle regulation such as CCND1, via JAK2-STAT3 pathway, or VEGFA, via MAPK1/3 and PI3K-AKT1 pathways. May also play an apoptotic role via JAK2-STAT3 pathway and up-regulation of BIRC5 expression. Pro-angiogenic, has mitogenic activity on vascular endothelial cells and plays a role in matrix remodeling by regulating the expression of matrix metalloproteinases (MMPs) and tissue inhibitors of metalloproteinases (TIMPs). In innate immunity, modulates the activity and function of neutrophils by increasing chemotaxis and the secretion of oxygen radicals. Increases phagocytosis by macrophages and enhances secretion of pro-inflammatory mediators. Increases cytotoxic ability of NK cells. Plays a pro-inflammatory role, in synergy with IL1B, by inducing NOS2 which promotes the production of IL6, IL8 and Prostaglandin E2, through a signaling pathway that involves JAK2, PI3K, MAP2K1/MEK1 and MAPK14/p38. In adaptive immunity, promotes the switch of memory T-cells towards T helper-1 cell immune responses. Increases CD4(+)CD25(-) T-cell proliferation and reduces autophagy during TCR (T-cell receptor) stimulation, through MTOR signaling pathway activation and BCL2 up-regulation. The protein is Leptin (LEP) of Bubalus bubalis (Domestic water buffalo).